The primary structure comprises 287 residues: Light-independent protochlorophyllide reductase iron-sulfur ATP-binding protein (287 aa).

Residues 10 to 15 (GIGKST) and lysine 39 each bind ATP. A Mg(2+)-binding site is contributed by serine 14. The [4Fe-4S] cluster site is built by cysteine 95 and cysteine 129. 180–181 (NR) is a binding site for ATP.

It belongs to the NifH/BchL/ChlL family. As to quaternary structure, homodimer. Protochlorophyllide reductase is composed of three subunits; ChlL, ChlN and ChlB. It depends on [4Fe-4S] cluster as a cofactor.

The protein resides in the plastid. It is found in the chloroplast. The catalysed reaction is chlorophyllide a + oxidized 2[4Fe-4S]-[ferredoxin] + 2 ADP + 2 phosphate = protochlorophyllide a + reduced 2[4Fe-4S]-[ferredoxin] + 2 ATP + 2 H2O. It participates in porphyrin-containing compound metabolism; chlorophyll biosynthesis (light-independent). Its function is as follows. Component of the dark-operative protochlorophyllide reductase (DPOR) that uses Mg-ATP and reduced ferredoxin to reduce ring D of protochlorophyllide (Pchlide) to form chlorophyllide a (Chlide). This reaction is light-independent. The L component serves as a unique electron donor to the NB-component of the complex, and binds Mg-ATP. This is Light-independent protochlorophyllide reductase iron-sulfur ATP-binding protein from Nephroselmis olivacea (Green alga).